The chain runs to 397 residues: 3-ketoacyl-CoA thiolase, mitochondrial (397 aa).

The N-terminal 16 residues, 1 to 16, are a transit peptide targeting the mitochondrion; not cleaved; sequence MALLRGVFIVAAKRTP. Lys25 is modified (N6-acetyllysine; alternate). N6-succinyllysine; alternate is present on Lys25. Cys92 functions as the Acyl-thioester intermediate in the catalytic mechanism. Thr119 is subject to Phosphothreonine. Ser121 carries the post-translational modification Phosphoserine. At Tyr127 the chain carries Phosphotyrosine. Thr136 carries the phosphothreonine modification. Position 137 is an N6-acetyllysine; alternate (Lys137). Residue Lys137 is modified to N6-succinyllysine; alternate. Ser140 carries the post-translational modification Phosphoserine. An N6-acetyllysine; alternate mark is found at Lys143, Lys171, Lys191, and Lys209. N6-succinyllysine; alternate is present on residues Lys143, Lys171, Lys191, and Lys209. N6-succinyllysine is present on residues Lys212 and Lys214. Residues Arg224 and Thr227 each coordinate CoA. At Lys234 the chain carries N6-acetyllysine; alternate. Lys234 is subject to N6-succinyllysine; alternate. Lys240 carries the N6-succinyllysine modification. At Lys241 the chain carries N6-acetyllysine. Ser251 contacts CoA. Lys269 and Lys270 each carry N6-acetyllysine. At Lys305 the chain carries N6-acetyllysine; alternate. The residue at position 305 (Lys305) is an N6-succinyllysine; alternate. Ser310 carries the post-translational modification Phosphoserine. Lys312 carries the N6-acetyllysine; alternate modification. The residue at position 312 (Lys312) is an N6-succinyllysine; alternate. A Phosphoserine modification is found at Ser333. 2 positions are modified to N6-acetyllysine: Lys340 and Lys375. Residue Cys382 is the Proton donor/acceptor of the active site.

This sequence belongs to the thiolase-like superfamily. Thiolase family. In terms of assembly, homotetramer. Interacts with BNIP3.

It is found in the mitochondrion. It carries out the reaction an acyl-CoA + acetyl-CoA = a 3-oxoacyl-CoA + CoA. The catalysed reaction is 2 acetyl-CoA = acetoacetyl-CoA + CoA. The enzyme catalyses acetyl-CoA + H2O = acetate + CoA + H(+). It catalyses the reaction propanoyl-CoA + H2O = propanoate + CoA + H(+). It carries out the reaction butanoyl-CoA + H2O = butanoate + CoA + H(+). The catalysed reaction is hexanoyl-CoA + H2O = hexanoate + CoA + H(+). The enzyme catalyses octanoyl-CoA + H2O = octanoate + CoA + H(+). It catalyses the reaction decanoyl-CoA + H2O = decanoate + CoA + H(+). It carries out the reaction dodecanoyl-CoA + H2O = dodecanoate + CoA + H(+). The catalysed reaction is tetradecanoyl-CoA + H2O = tetradecanoate + CoA + H(+). The enzyme catalyses hexadecanoyl-CoA + H2O = hexadecanoate + CoA + H(+). It functions in the pathway lipid metabolism; fatty acid beta-oxidation. Functionally, in the production of energy from fats, this is one of the enzymes that catalyzes the last step of the mitochondrial beta-oxidation pathway, an aerobic process breaking down fatty acids into acetyl-CoA. Using free coenzyme A/CoA, catalyzes the thiolytic cleavage of medium- to long-chain unbranched 3-oxoacyl-CoAs into acetyl-CoA and a fatty acyl-CoA shortened by two carbon atoms. Also catalyzes the condensation of two acetyl-CoA molecules into acetoacetyl-CoA and could be involved in the production of ketone bodies. Also displays hydrolase activity on various fatty acyl-CoAs. Thereby, could be responsible for the production of acetate in a side reaction to beta-oxidation. Abolishes BNIP3-mediated apoptosis and mitochondrial damage. In Bos taurus (Bovine), this protein is 3-ketoacyl-CoA thiolase, mitochondrial (ACAA2).